The primary structure comprises 467 residues: MNTVRSEKDSMGAIDVPADKLWGAQTQRSLEHFRISTEKMPTSLIHALALTKRAAAKVNEDLGLLSEEKASAIRQAADEVLAGQHDDEFPLAIWQTGSGTQSNMNMNEVLANRASELLGGVRGMERKVHPNDDVNKSQSSNDVFPTAMHVAALLALRKQLIPQLKTLTQTLSEKSRAFADIVKIGRTHLQDATPLTLGQEISGWVAMLEHNLKHIEYSLPHVAELALGGTAVGTGLNTHPEYARRVADELAVITCAPFVTAPNKFEALATCDALVQAHGALKGLAASLMKIANDVRWLASGPRCGIGEISIPENEPGSSIMPGKVNPTQCEALTMLCCQVMGNDVAINMGGASGNFELNVFRPMVIHNFLQSVRLLADGMESFNKHCAVGIEPNRERINQLLNESLMLVTALNTHIGYDKAAEIAKKAHKEGLTLKAAALALGYLSEAEFDRWVRPEQMVGSMKAGG.

Substrate contacts are provided by residues S98–T100, R126, H129–D132, S139–N141, and T187. The active-site Proton donor/acceptor is the H188. S318 is a catalytic residue. Residues S319 and K324–N326 each bind substrate.

This sequence belongs to the class-II fumarase/aspartase family. Fumarase subfamily. In terms of assembly, homotetramer.

The protein resides in the cytoplasm. The enzyme catalyses (S)-malate = fumarate + H2O. It functions in the pathway carbohydrate metabolism; tricarboxylic acid cycle; (S)-malate from fumarate: step 1/1. Its function is as follows. Involved in the TCA cycle. Catalyzes the stereospecific interconversion of fumarate to L-malate. In Escherichia coli O6:H1 (strain CFT073 / ATCC 700928 / UPEC), this protein is Fumarate hydratase class II.